A 145-amino-acid chain; its full sequence is uncharacterized protein (145 aa).

The disordered stretch occupies residues 62 to 145 (LPSVGGRMTA…QLPQQGGCPG (84 aa)). Over residues 84–95 (ASSPEDPPLPHP) the composition is skewed to pro residues.

This is an uncharacterized protein from Homo sapiens (Human).